The sequence spans 438 residues: MRRFRVWPPSPSPWPLLASRPCPHSHHHRSPFHASANSGARQGNFILPGATAATLVMFGILHARRMYEDQKVVERKEKGIEPEFSPDFKASFLRLLPLRSMSRLWGSLMEVELPVFMRPAIYKAWARAFHSNLQEAAMPLEEYPSLQAFFIRSLKEGSRPIDADPNCLVSPVDGKVLRLGELRGPGTMIEQVKGFSYSAASLLGASSSLHGAEEEDFSREHTEQSNPADSNAKSWWRVSVAKPKLWDQTLLSPKKGIFYCVIYLHPGDYHRVHSPVDWNIIKRRHFSGHLFPQNERAVRTIRNLYVENERVVLEGQWKEGFVAIAAIGATNVGSIKLYIEPELRTNRAGSKILNSQPEPPDDRVYEPVGTGVMVKKGEEIAGFKMGSTVVMVFEAPVVSKARWREDGSGTVTSDFDFCIKAGDRIRVGEAIGRWTSRE.

The transit peptide at 1–21 (MRRFRVWPPSPSPWPLLASRP) directs the protein to the mitochondrion. The Mitochondrial matrix segment spans residues 22 to 48 (CPHSHHHRSPFHASANSGARQGNFILP). A helical transmembrane segment spans residues 49 to 67 (GATAATLVMFGILHARRMY). Topologically, residues 68–438 (EDQKVVERKE…EAIGRWTSRE (371 aa)) are mitochondrial intermembrane. Residues Asp173, His273, and Ser387 each act as charge relay system; for autoendoproteolytic cleavage activity in the active site. The active-site Schiff-base intermediate with substrate; via pyruvic acid; for decarboxylase activity is Ser387. A Pyruvic acid (Ser); by autocatalysis modification is found at Ser387.

It belongs to the phosphatidylserine decarboxylase family. PSD-B subfamily. Eukaryotic type I sub-subfamily. In terms of assembly, heterodimer of a large membrane-associated beta subunit and a small pyruvoyl-containing alpha subunit. It depends on pyruvate as a cofactor. Post-translationally, is synthesized initially as an inactive proenzyme. Formation of the active enzyme involves a self-maturation process in which the active site pyruvoyl group is generated from an internal serine residue via an autocatalytic post-translational modification. Two non-identical subunits are generated from the proenzyme in this reaction, and the pyruvate is formed at the N-terminus of the alpha chain, which is derived from the carboxyl end of the proenzyme. The autoendoproteolytic cleavage occurs by a canonical serine protease mechanism, in which the side chain hydroxyl group of the serine supplies its oxygen atom to form the C-terminus of the beta chain, while the remainder of the serine residue undergoes an oxidative deamination to produce ammonia and the pyruvoyl prosthetic group on the alpha chain. During this reaction, the Ser that is part of the protease active site of the proenzyme becomes the pyruvoyl prosthetic group, which constitutes an essential element of the active site of the mature decarboxylase.

It localises to the mitochondrion inner membrane. The catalysed reaction is a 1,2-diacyl-sn-glycero-3-phospho-L-serine + H(+) = a 1,2-diacyl-sn-glycero-3-phosphoethanolamine + CO2. It participates in phospholipid metabolism; phosphatidylethanolamine biosynthesis; phosphatidylethanolamine from CDP-diacylglycerol: step 2/2. Catalyzes the formation of phosphatidylethanolamine (PtdEtn) from phosphatidylserine (PtdSer). Plays a central role in phospholipid metabolism and in the interorganelle trafficking of phosphatidylserine. This is Phosphatidylserine decarboxylase proenzyme 1, mitochondrial (PSD1) from Oryza sativa subsp. japonica (Rice).